The following is a 385-amino-acid chain: DNA replication and repair protein RecF (385 aa).

Residue 30 to 37 (GPNGYGKT) participates in ATP binding.

The protein belongs to the RecF family.

It is found in the cytoplasm. Its function is as follows. The RecF protein is involved in DNA metabolism; it is required for DNA replication and normal SOS inducibility. RecF binds preferentially to single-stranded, linear DNA. It also seems to bind ATP. This Mycobacterium tuberculosis (strain ATCC 25177 / H37Ra) protein is DNA replication and repair protein RecF.